A 265-amino-acid polypeptide reads, in one-letter code: Taurine import ATP-binding protein TauB (265 aa).

In terms of domain architecture, ABC transporter spans Q7–I236. G41–T48 contacts ATP.

Belongs to the ABC transporter superfamily. Taurine importer (TC 3.A.1.17.1) family. The complex is composed of two ATP-binding proteins (TauB), two transmembrane proteins (TauC) and a solute-binding protein (TauA).

Its subcellular location is the cell inner membrane. It carries out the reaction taurine(out) + ATP + H2O = taurine(in) + ADP + phosphate + H(+). In terms of biological role, part of the ABC transporter complex TauABC involved in taurine import. Responsible for energy coupling to the transport system. This is Taurine import ATP-binding protein TauB from Pelagibacter ubique (strain HTCC1062).